An 85-amino-acid polypeptide reads, in one-letter code: Phosphocarrier protein HPr (85 aa).

The HPr domain occupies 1–85 (MFQNQVKITA…HLSLIMTELE (85 aa)). The active-site Pros-phosphohistidine intermediate is H15.

Belongs to the HPr family.

Its subcellular location is the cytoplasm. General (non sugar-specific) component of the phosphoenolpyruvate-dependent sugar phosphotransferase system (sugar PTS). This major carbohydrate active-transport system catalyzes the phosphorylation of incoming sugar substrates concomitantly with their translocation across the cell membrane. The phosphoryl group from phosphoenolpyruvate (PEP) is transferred to the phosphoryl carrier protein HPr by enzyme I. Phospho-HPr then transfers it to the PTS EIIA domain. This is Phosphocarrier protein HPr (ptsH) from Buchnera aphidicola subsp. Acyrthosiphon pisum (strain APS) (Acyrthosiphon pisum symbiotic bacterium).